The following is a 107-amino-acid chain: Nucleoid-associated protein HNE_0371 (107 aa).

This sequence belongs to the YbaB/EbfC family. As to quaternary structure, homodimer.

It localises to the cytoplasm. Its subcellular location is the nucleoid. Functionally, binds to DNA and alters its conformation. May be involved in regulation of gene expression, nucleoid organization and DNA protection. This is Nucleoid-associated protein HNE_0371 from Hyphomonas neptunium (strain ATCC 15444).